The chain runs to 271 residues: Pyrroline-5-carboxylate reductase (271 aa).

Belongs to the pyrroline-5-carboxylate reductase family.

It localises to the cytoplasm. The catalysed reaction is L-proline + NADP(+) = (S)-1-pyrroline-5-carboxylate + NADPH + 2 H(+). It catalyses the reaction L-proline + NAD(+) = (S)-1-pyrroline-5-carboxylate + NADH + 2 H(+). Its pathway is amino-acid biosynthesis; L-proline biosynthesis; L-proline from L-glutamate 5-semialdehyde: step 1/1. In terms of biological role, catalyzes the reduction of 1-pyrroline-5-carboxylate (PCA) to L-proline. This chain is Pyrroline-5-carboxylate reductase, found in Staphylococcus epidermidis (strain ATCC 35984 / DSM 28319 / BCRC 17069 / CCUG 31568 / BM 3577 / RP62A).